The primary structure comprises 924 residues: Periplasmic nitrate reductase (924 aa).

Positions Met1–Ala30 form a signal peptide, tat-type signal. One can recognise a 4Fe-4S Mo/W bis-MGD-type domain in the interval Trp35–Asp91. [4Fe-4S] cluster contacts are provided by Cys42, Cys45, Cys49, and Cys77. Residues Lys79, Gln147, Asn172, Cys176, Trp209–Met216, Met417, Gln421, Asn527, Ser552–Asp553, Lys575, Asp602, and Thr814–Ser823 each bind Mo-bis(molybdopterin guanine dinucleotide). Trp890 serves as a coordination point for substrate. Residues Asn898 and Lys915 each contribute to the Mo-bis(molybdopterin guanine dinucleotide) site.

The protein belongs to the prokaryotic molybdopterin-containing oxidoreductase family. NasA/NapA/NarB subfamily. Component of the periplasmic nitrate reductase NapAB complex composed of NapA and NapB. The cofactor is [4Fe-4S] cluster. Mo-bis(molybdopterin guanine dinucleotide) serves as cofactor. Predicted to be exported by the Tat system. The position of the signal peptide cleavage has not been experimentally proven.

The protein resides in the periplasm. It carries out the reaction 2 Fe(II)-[cytochrome] + nitrate + 2 H(+) = 2 Fe(III)-[cytochrome] + nitrite + H2O. Functionally, catalytic subunit of the periplasmic nitrate reductase complex NapAB. Receives electrons from NapB and catalyzes the reduction of nitrate to nitrite. This Campylobacter jejuni subsp. jejuni serotype O:2 (strain ATCC 700819 / NCTC 11168) protein is Periplasmic nitrate reductase.